A 235-amino-acid chain; its full sequence is Large ribosomal subunit protein uL1 (235 aa).

It belongs to the universal ribosomal protein uL1 family. As to quaternary structure, part of the 50S ribosomal subunit.

In terms of biological role, binds directly to 23S rRNA. The L1 stalk is quite mobile in the ribosome, and is involved in E site tRNA release. Functionally, protein L1 is also a translational repressor protein, it controls the translation of the L11 operon by binding to its mRNA. The chain is Large ribosomal subunit protein uL1 from Desulfovibrio desulfuricans (strain ATCC 27774 / DSM 6949 / MB).